The following is a 321-amino-acid chain: MRIGQYQLRNRLIAAPMAGITDRPFRTLCYEMGAGLTVSEMMSSNPQVWESDKSRLRMVHVDEPGIRTVQIAGSDPVEMADAARINVESGAQIIDINMGCPAKKVNRKLAGSALLQYPDLVKSILIGVVNAVDVPVTLKIRTGWAPEHRNCVEIAQLAEDCGIQALTIHGRTRACLFNGEAEYDSIRAVKQKVSIPIIANGDITNPHKARAVLDYTGADALMIGRAAQGRPWIFREIQHYLDTGELLPPLPLAEVKRLLCTHVRELHDFYGQAKGYRIARKHVSWYLQEHAPDDQFRRTFNAIEDASEQLEALEAYFENFA.

Residues 16-18 and glutamine 70 contribute to the FMN site; that span reads PMA. Catalysis depends on cysteine 100, which acts as the Proton donor. Residues lysine 139, 200–202, and 224–225 contribute to the FMN site; these read NGD and GR.

This sequence belongs to the Dus family. DusB subfamily. FMN is required as a cofactor.

It carries out the reaction a 5,6-dihydrouridine in tRNA + NAD(+) = a uridine in tRNA + NADH + H(+). It catalyses the reaction a 5,6-dihydrouridine in tRNA + NADP(+) = a uridine in tRNA + NADPH + H(+). Its function is as follows. Catalyzes the synthesis of 5,6-dihydrouridine (D), a modified base found in the D-loop of most tRNAs, via the reduction of the C5-C6 double bond in target uridines. The protein is tRNA-dihydrouridine synthase B of Salmonella typhi.